A 276-amino-acid chain; its full sequence is Probable ABC transporter permease protein PH1036 (276 aa).

The next 6 membrane-spanning stretches (helical) occupy residues 12–32 (IAWS…MASV), 75–95 (IVAI…AYAF), 109–129 (FIVL…YFLL), 137–157 (TFRG…IFFM), 186–206 (IVLP…FTWV), and 241–261 (GLLT…YALF). One can recognise an ABC transmembrane type-1 domain in the interval 70-261 (LKNSLIVAIP…LVPLLVYALF (192 aa)).

It belongs to the binding-protein-dependent transport system permease family. MalFG subfamily.

It localises to the cell membrane. In terms of biological role, probably part of a binding-protein-dependent transport system PH1036/38/39. Probably responsible for the translocation of the substrate across the membrane. In Pyrococcus horikoshii (strain ATCC 700860 / DSM 12428 / JCM 9974 / NBRC 100139 / OT-3), this protein is Probable ABC transporter permease protein PH1036.